The primary structure comprises 247 residues: ATP synthase subunit a (247 aa).

Transmembrane regions (helical) follow at residues 24–44 (IAFT…AAMM), 82–102 (FFPL…VGII), 112–132 (IIVT…YGFY), 141–161 (LFVP…IEII), 181–201 (GHVT…LGFV), and 206–226 (ALLP…VAFL).

The protein belongs to the ATPase A chain family. As to quaternary structure, F-type ATPases have 2 components, CF(1) - the catalytic core - and CF(0) - the membrane proton channel. CF(1) has five subunits: alpha(3), beta(3), gamma(1), delta(1), epsilon(1). CF(0) has four main subunits: a, b, b' and c.

The protein resides in the cell inner membrane. Its function is as follows. Key component of the proton channel; it plays a direct role in the translocation of protons across the membrane. This is ATP synthase subunit a from Bradyrhizobium sp. (strain ORS 278).